The chain runs to 414 residues: Cytosolic-abundant heat soluble protein 89226 (414 aa).

2 stretches are compositionally biased toward basic and acidic residues: residues 27-45 and 69-84; these read IGED…DKRP and AGQR…ERLR. The interval 27-155 is disordered; that stretch reads IGEDRGKEDP…SNPGMNNGMT (129 aa). Composition is skewed to low complexity over residues 86 to 101 and 120 to 134; these read SRSS…VEPS and SSNR…SSSD. The span at 142 to 155 shows a compositional bias: polar residues; sequence ASRNSNPGMNNGMT. CAHS motif regions lie at residues 305 to 323 and 342 to 360; these read YRNA…LERQ and QQQE…LEQE. Residues 341–376 are a coiled coil; it reads RQQQEIRLEAEYAMRALEQERVNARAALDQAMASTN. Residues 388 to 405 are compositionally biased toward polar residues; it reads THSQGRVTTTSESRTSQA. Positions 388-414 are disordered; that stretch reads THSQGRVTTTSESRTSQARGPATAAVI.

Belongs to the Cytosolic-abundant heat soluble protein (CAHS) family.

It is found in the cytoplasm. In terms of biological role, CAHS proteins are cytosolic heat soluble proteins that seem to contribute to the anhydrobiosis in tardigrades, but their specific mechanisms are yet to be identified. It is possible that protection during anhydrobiosis might occur via the stabilization of vitrifying small molecules such as sugars, but not via the direct glass transition of CAHS proteins themselves. The sequence is that of Cytosolic-abundant heat soluble protein 89226 from Hypsibius exemplaris (Freshwater tardigrade).